Consider the following 186-residue polypeptide: D-glycero-beta-D-manno-heptose-1,7-bisphosphate 7-phosphatase (186 aa).

The active-site Nucleophile is the aspartate 9. Mg(2+) contacts are provided by aspartate 9 and aspartate 11. Residues 9–11 (DRD), 17–20 (DHGY), and 51–54 (TNQS) each bind substrate. Catalysis depends on aspartate 11, which acts as the Proton donor. Zn(2+)-binding residues include cysteine 90, histidine 92, cysteine 105, and cysteine 107. 108-109 (RK) contacts substrate. Residues aspartate 134 and lysine 135 each contribute to the Mg(2+) site. Lysine 135 is a substrate binding site.

This sequence belongs to the GmhB family. As to quaternary structure, monomer. Mg(2+) serves as cofactor. The cofactor is Zn(2+).

It is found in the cytoplasm. The catalysed reaction is D-glycero-beta-D-manno-heptose 1,7-bisphosphate + H2O = D-glycero-beta-D-manno-heptose 1-phosphate + phosphate. It participates in nucleotide-sugar biosynthesis; ADP-L-glycero-beta-D-manno-heptose biosynthesis; ADP-L-glycero-beta-D-manno-heptose from D-glycero-beta-D-manno-heptose 7-phosphate: step 2/4. It functions in the pathway bacterial outer membrane biogenesis; LPS core biosynthesis. In terms of biological role, converts the D-glycero-beta-D-manno-heptose 1,7-bisphosphate intermediate into D-glycero-beta-D-manno-heptose 1-phosphate by removing the phosphate group at the C-7 position in vitro. Also catalyzes the dephosphorylation of D-glycero-alpha-D-manno-heptose-1,7-bisphosphate in vitro. The polypeptide is D-glycero-beta-D-manno-heptose-1,7-bisphosphate 7-phosphatase (gmhB) (Vibrio cholerae serotype O1 (strain ATCC 39315 / El Tor Inaba N16961)).